A 476-amino-acid polypeptide reads, in one-letter code: Eukaryotic translation initiation factor 3 subunit L (476 aa).

The region spanning 257–452 (DAIRMFSHIL…DLDYALENDL (196 aa)) is the PCI domain.

This sequence belongs to the eIF-3 subunit L family. In terms of assembly, component of the eukaryotic translation initiation factor 3 (eIF-3) complex.

The protein localises to the cytoplasm. Functionally, component of the eukaryotic translation initiation factor 3 (eIF-3) complex, which is involved in protein synthesis of a specialized repertoire of mRNAs and, together with other initiation factors, stimulates binding of mRNA and methionyl-tRNAi to the 40S ribosome. The eIF-3 complex specifically targets and initiates translation of a subset of mRNAs involved in cell proliferation. This Aspergillus fumigatus (strain CBS 144.89 / FGSC A1163 / CEA10) (Neosartorya fumigata) protein is Eukaryotic translation initiation factor 3 subunit L.